Here is a 376-residue protein sequence, read N- to C-terminus: Chaperone protein DnaJ (376 aa).

Residues 5-70 form the J domain; that stretch reads DYYEVLGAAK…QKRAAYDQFG (66 aa). The segment at 134-212 adopts a CR-type zinc-finger fold; sequence GCDEKIRIPT…CGGQGRVQNT (79 aa). Residues Cys147, Cys150, Cys164, Cys167, Cys186, Cys189, Cys200, and Cys203 each coordinate Zn(2+). CXXCXGXG motif repeat units lie at residues 147–154, 164–171, 186–193, and 200–207; these read CDVCHGSG, CTTCGGVG, CPTCKGEG, and CGNCGGQG.

This sequence belongs to the DnaJ family. Homodimer. Requires Zn(2+) as cofactor.

The protein resides in the cytoplasm. Functionally, participates actively in the response to hyperosmotic and heat shock by preventing the aggregation of stress-denatured proteins and by disaggregating proteins, also in an autonomous, DnaK-independent fashion. Unfolded proteins bind initially to DnaJ; upon interaction with the DnaJ-bound protein, DnaK hydrolyzes its bound ATP, resulting in the formation of a stable complex. GrpE releases ADP from DnaK; ATP binding to DnaK triggers the release of the substrate protein, thus completing the reaction cycle. Several rounds of ATP-dependent interactions between DnaJ, DnaK and GrpE are required for fully efficient folding. Also involved, together with DnaK and GrpE, in the DNA replication of plasmids through activation of initiation proteins. This chain is Chaperone protein DnaJ, found in Alcanivorax borkumensis (strain ATCC 700651 / DSM 11573 / NCIMB 13689 / SK2).